Reading from the N-terminus, the 181-residue chain is MSRIGRMPIKIPPDVKITIEGNTVRVEGPKGRLEREIPANTKLVVENGRAVIEKAGEEKPGTAMLGLTRTLVANMVDGVTKGFQRNLELTGVGYRASLQGRKLVMTLGYSHPVEYEPPADIEIEVPAVTRIIIRGADKEKVGRVAAKIRSFRSPEPYKGKGVRYEGEKIRLKAGKAGLKKR.

Belongs to the universal ribosomal protein uL6 family. In terms of assembly, part of the 50S ribosomal subunit.

In terms of biological role, this protein binds to the 23S rRNA, and is important in its secondary structure. It is located near the subunit interface in the base of the L7/L12 stalk, and near the tRNA binding site of the peptidyltransferase center. In Desulforudis audaxviator (strain MP104C), this protein is Large ribosomal subunit protein uL6.